We begin with the raw amino-acid sequence, 314 residues long: Deoxymugineic acid synthase 1 (314 aa).

An NADP(+)-binding site is contributed by Asp44. The active-site Proton donor is Tyr49. A substrate-binding site is contributed by His112. NADP(+)-binding positions include 158-159 (CN), Gln180, 258-266 (FDEGRMKEN), and 273-281 (ELSEEERQR).

Belongs to the aldo/keto reductase family.

The catalysed reaction is 2'-deoxymugineate + NAD(+) = 3''-deamino-3''-oxonicotianamine + NADH + H(+). The enzyme catalyses 2'-deoxymugineate + NADP(+) = 3''-deamino-3''-oxonicotianamine + NADPH + H(+). The protein operates within siderophore biosynthesis. Functionally, catalyzes the reduction of a 3''-keto intermediate during the biosynthesis of 2'-deoxymugineic acid (DMA) from L-Met. Involved in the formation of phytosiderophores (MAs) belonging to the mugineic acid family and required to acquire iron. The protein is Deoxymugineic acid synthase 1 of Zea mays (Maize).